The following is a 276-amino-acid chain: Dermonecrotic toxin LlSicTox-alphaIV2iii (276 aa).

His-5 is an active-site residue. Mg(2+) is bound by residues Glu-25 and Asp-27. The active-site Nucleophile is the His-41. Disulfide bonds link Cys-45–Cys-51 and Cys-47–Cys-193. Residue Asp-85 participates in Mg(2+) binding.

Belongs to the arthropod phospholipase D family. Class II subfamily. Requires Mg(2+) as cofactor. As to expression, expressed by the venom gland.

It localises to the secreted. The enzyme catalyses an N-(acyl)-sphingosylphosphocholine = an N-(acyl)-sphingosyl-1,3-cyclic phosphate + choline. It carries out the reaction an N-(acyl)-sphingosylphosphoethanolamine = an N-(acyl)-sphingosyl-1,3-cyclic phosphate + ethanolamine. It catalyses the reaction a 1-acyl-sn-glycero-3-phosphocholine = a 1-acyl-sn-glycero-2,3-cyclic phosphate + choline. The catalysed reaction is a 1-acyl-sn-glycero-3-phosphoethanolamine = a 1-acyl-sn-glycero-2,3-cyclic phosphate + ethanolamine. Dermonecrotic toxins cleave the phosphodiester linkage between the phosphate and headgroup of certain phospholipids (sphingolipid and lysolipid substrates), forming an alcohol (often choline) and a cyclic phosphate. This toxin acts on sphingomyelin (SM). It may also act on ceramide phosphoethanolamine (CPE), lysophosphatidylcholine (LPC) and lysophosphatidylethanolamine (LPE), but not on lysophosphatidylserine (LPS), and lysophosphatidylglycerol (LPG). It acts by transphosphatidylation, releasing exclusively cyclic phosphate products as second products. Induces dermonecrosis, hemolysis, increased vascular permeability, edema, inflammatory response, and platelet aggregation. The sequence is that of Dermonecrotic toxin LlSicTox-alphaIV2iii from Loxosceles laeta (South American recluse spider).